A 166-amino-acid polypeptide reads, in one-letter code: Flagellar protein LafL (166 aa).

The chain crosses the membrane as a helical span at residues 6 to 26 (MIAMFIAMIITSALVSAATIM).

It belongs to the FliL family.

It is found in the cell inner membrane. Functionally, controls the rotational direction of flagella during chemotaxis. The sequence is that of Flagellar protein LafL (lafL) from Vibrio parahaemolyticus serotype O3:K6 (strain RIMD 2210633).